Here is a 179-residue protein sequence, read N- to C-terminus: MARLKQVYKDQVVAKLTEEFSYKNVMEVPKITKITLNMGVGEAIADKKLLEHAVNDLEALSGQKVVVTKARKSVAGFKIRDGYPIGCKVTLRGERMWDFFDRLVDVAIPRIRDFRGLNPKSFDGRGNYSMGVKEQIIFPEIDYDKVDRVRGMDITITTTARTDEEGRALLAAFSFPFKK.

It belongs to the universal ribosomal protein uL5 family. In terms of assembly, part of the 50S ribosomal subunit; part of the 5S rRNA/L5/L18/L25 subcomplex. Contacts the 5S rRNA and the P site tRNA. Forms a bridge to the 30S subunit in the 70S ribosome.

Functionally, this is one of the proteins that bind and probably mediate the attachment of the 5S RNA into the large ribosomal subunit, where it forms part of the central protuberance. In the 70S ribosome it contacts protein S13 of the 30S subunit (bridge B1b), connecting the 2 subunits; this bridge is implicated in subunit movement. Contacts the P site tRNA; the 5S rRNA and some of its associated proteins might help stabilize positioning of ribosome-bound tRNAs. The sequence is that of Large ribosomal subunit protein uL5 from Marinomonas sp. (strain MWYL1).